The primary structure comprises 406 residues: Dihydroorotase, mitochondrial (406 aa).

A mitochondrion-targeting transit peptide spans 1 to 41; the sequence is MQTAATSTFFANPHVKHLPGPFLRPSPHYGALVHLPSFRNK. Zn(2+) contacts are provided by His69, His71, Lys155, His193, His231, and Asp305. An N6-carboxylysine modification is found at Lys155.

Belongs to the metallo-dependent hydrolases superfamily. DHOase family. Class II DHOase subfamily. Requires Zn(2+) as cofactor.

It is found in the mitochondrion. The catalysed reaction is (S)-dihydroorotate + H2O = N-carbamoyl-L-aspartate + H(+). It participates in pyrimidine metabolism; UMP biosynthesis via de novo pathway; (S)-dihydroorotate from bicarbonate: step 3/3. The protein is Dihydroorotase, mitochondrial (PYRC) of Oryza sativa subsp. japonica (Rice).